We begin with the raw amino-acid sequence, 1708 residues long: 187-kDa microtubule-associated protein AIR9 (1708 aa).

The span at 67-93 (SSLRVSGTTPVTIRRNSTGGVTENLAG) shows a compositional bias: polar residues. The tract at residues 67–255 (SSLRVSGTTP…KTSTPESRDS (189 aa)) is disordered. A compositionally biased stretch (basic and acidic residues) spans 110 to 121 (DPVRRSLPELRK). The span at 122-134 (SSVSSLSAKTVSK) shows a compositional bias: low complexity. Polar residues predominate over residues 149–165 (GSRSLTKSTGFSLSKPE). A compositionally biased stretch (low complexity) spans 173–234 (SVSVSSKRAP…SIRSKSFSSP (62 aa)). LRR repeat units follow at residues 267–290 (AGDD…GLHL), 291–315 (SPNL…ILNR), 316–335 (VKVL…EPLE), 337–359 (CKML…LPQL), 360–382 (PNLE…SQPR), 384–402 (QVLA…FPYL), and 403–425 (PVLE…EAAS). A9 repeat units lie at residues 489–584 (PSGY…FAIS), 601–682 (LNGE…QYKY), 698–777 (ITGD…VSTS), 793–878 (IVGD…VYVL), 895–977 (ITGD…RSCM), 994–1073 (VVGA…AISE), 1090–1167 (FLGS…RSIR), 1183–1272 (IPDC…VVVI), 1287–1365 (VRVK…KMSE), 1382–1473 (FTGK…AYAE), and 1489–1569 (IEGQ…VSAS).

As to quaternary structure, interacts with KCBP. Strongly expressed in dividing cells, like the meristemic region of the root tip.

It localises to the cytoplasm. The protein resides in the cell cortex. The protein localises to the cytoskeleton. It is found in the phragmoplast. In terms of biological role, microtubule-associated protein that may be involved in the maturation of cell plates and proper insertion of cross-walls after cytokinesis. This chain is 187-kDa microtubule-associated protein AIR9, found in Arabidopsis thaliana (Mouse-ear cress).